A 171-amino-acid chain; its full sequence is UPF0763 protein Hac_0849 (171 aa).

It belongs to the UPF0763 family.

The protein is UPF0763 protein Hac_0849 of Helicobacter acinonychis (strain Sheeba).